A 242-amino-acid chain; its full sequence is DNA repair protein RecO (242 aa).

The protein belongs to the RecO family. Monomer.

In terms of biological role, involved in DNA repair and RecF pathway recombination. In Salmonella gallinarum (strain 287/91 / NCTC 13346), this protein is DNA repair protein RecO.